A 265-amino-acid polypeptide reads, in one-letter code: 3-methyl-2-oxobutanoate hydroxymethyltransferase (265 aa).

Residues D43 and D82 each contribute to the Mg(2+) site. 3-methyl-2-oxobutanoate-binding positions include 43–44 (DS), D82, and K111. Mg(2+) is bound at residue E113. The Proton acceptor role is filled by E180.

It belongs to the PanB family. Homodecamer; pentamer of dimers. Mg(2+) serves as cofactor.

Its subcellular location is the cytoplasm. It carries out the reaction 3-methyl-2-oxobutanoate + (6R)-5,10-methylene-5,6,7,8-tetrahydrofolate + H2O = 2-dehydropantoate + (6S)-5,6,7,8-tetrahydrofolate. The protein operates within cofactor biosynthesis; (R)-pantothenate biosynthesis; (R)-pantoate from 3-methyl-2-oxobutanoate: step 1/2. In terms of biological role, catalyzes the reversible reaction in which hydroxymethyl group from 5,10-methylenetetrahydrofolate is transferred onto alpha-ketoisovalerate to form ketopantoate. In Francisella tularensis subsp. mediasiatica (strain FSC147), this protein is 3-methyl-2-oxobutanoate hydroxymethyltransferase.